The chain runs to 139 residues: Histone H2B (139 aa).

Residues 1–10 (MAPKVAEKKP) show a composition bias toward basic and acidic residues. Residues 1–47 (MAPKVAEKKPSLAGKAPAGKAPAEKKEAGKKTTTATGEKKKRTKARK) are disordered. Residues Lys-8 and Lys-9 each carry the N6-acetyllysine; alternate modification. Residues Lys-8 and Lys-9 each participate in a glycyl lysine isopeptide (Lys-Gly) (interchain with G-Cter in SUMO); alternate cross-link. Lys-15 carries the post-translational modification N6-acetyllysine. N6-acetyllysine; alternate is present on Lys-25. Lys-25 participates in a covalent cross-link: Glycyl lysine isopeptide (Lys-Gly) (interchain with G-Cter in SUMO); alternate. A Glycyl lysine isopeptide (Lys-Gly) (interchain with G-Cter in SUMO) cross-link involves residue Lys-26. A Glycyl lysine isopeptide (Lys-Gly) (interchain with G-Cter in ubiquitin) cross-link involves residue Lys-133.

It belongs to the histone H2B family. As to quaternary structure, the nucleosome is a histone octamer containing two molecules each of H2A, H2B, H3 and H4 assembled in one H3-H4 heterotetramer and two H2A-H2B heterodimers. The octamer wraps approximately 147 bp of DNA. Post-translationally, monoubiquitinated by the UBC2-BRE1 complex to form H2BK123ub1. H2BK123ub1 gives a specific tag for epigenetic transcriptional activation and is also prerequisite for H3K4me and H3K79me formation. H2BK123ub1 also modulates the formation of double-strand breaks during meiosis and is a prerequisite for DNA-damage checkpoint activation. In terms of processing, acetylated by GCN5 to form H2BK11ac and H2BK16ac. H2BK16ac can also be formed by ESA1. Acetylation of N-terminal lysines and particularly formation of H2BK11acK16ac has a positive effect on transcription. Sumoylation to form H2BK6su or H2BK7su, and probably also H2BK16su or H2BK17su, occurs preferentially near the telomeres and represses gene transcription.

Its subcellular location is the nucleus. The protein localises to the chromosome. Its function is as follows. Core component of nucleosome. Nucleosomes wrap and compact DNA into chromatin, limiting DNA accessibility to the cellular machineries which require DNA as a template. Histones thereby play a central role in transcription regulation, DNA repair, DNA replication and chromosomal stability. DNA accessibility is regulated via a complex set of post-translational modifications of histones, also called histone code, and nucleosome remodeling. In Yarrowia lipolytica (strain CLIB 122 / E 150) (Yeast), this protein is Histone H2B (HTB1).